Consider the following 396-residue polypeptide: 1-deoxy-D-xylulose 5-phosphate reductoisomerase (396 aa).

NADPH is bound by residues Thr-10, Gly-11, Ser-12, Ile-13, and Asn-123. Lys-124 provides a ligand contact to 1-deoxy-D-xylulose 5-phosphate. Position 125 (Glu-125) interacts with NADPH. Residue Asp-149 participates in Mn(2+) binding. 4 residues coordinate 1-deoxy-D-xylulose 5-phosphate: Ser-150, Glu-151, Ser-185, and His-208. Glu-151 serves as a coordination point for Mn(2+). NADPH is bound at residue Gly-214. The 1-deoxy-D-xylulose 5-phosphate site is built by Ser-221, Asn-226, Lys-227, and Glu-230. Glu-230 is a Mn(2+) binding site.

Belongs to the DXR family. It depends on Mg(2+) as a cofactor. Requires Mn(2+) as cofactor.

It catalyses the reaction 2-C-methyl-D-erythritol 4-phosphate + NADP(+) = 1-deoxy-D-xylulose 5-phosphate + NADPH + H(+). It participates in isoprenoid biosynthesis; isopentenyl diphosphate biosynthesis via DXP pathway; isopentenyl diphosphate from 1-deoxy-D-xylulose 5-phosphate: step 1/6. Catalyzes the NADPH-dependent rearrangement and reduction of 1-deoxy-D-xylulose-5-phosphate (DXP) to 2-C-methyl-D-erythritol 4-phosphate (MEP). The sequence is that of 1-deoxy-D-xylulose 5-phosphate reductoisomerase from Shewanella sp. (strain ANA-3).